A 207-amino-acid polypeptide reads, in one-letter code: Claudin-11 (207 aa).

M1 is a topological domain (cytoplasmic). A helical membrane pass occupies residues 2–22 (VATCLQVVGFVTSFVGWIGII). The Extracellular portion of the chain corresponds to 23-82 (VTTSTNDWVVTCGYTIPTCRKLDELGSKGLWADCVMATGLYHCKPLVDILILPGYVQACR). Residues 83-103 (ALMIAASVLGLPAILLLLTVL) form a helical membrane-spanning segment. At 104–122 (PCIRMGHEPGVAKYRRAQL) the chain is on the cytoplasmic side. Residues 123-143 (AGVMLVLVALCAMVATIWFPV) traverse the membrane as a helical segment. Residues 144–157 (CAHRETTIVSFGYS) are Extracellular-facing. The chain crosses the membrane as a helical span at residues 158–178 (LYAGWIGAVLCLVGGCVIVCC). Residues 179-207 (AGDAQAFGENRFYYSSGSSSPTHAKSAHV) are Cytoplasmic-facing. A phosphoserine mark is found at S193, S194, S197, and S198.

It belongs to the claudin family. As to quaternary structure, interacts with tetraspanin-3/TSPAN3. Interacts with OCLN.

The protein resides in the cell junction. The protein localises to the tight junction. It localises to the cell membrane. Plays a major role in tight junction-specific obliteration of the intercellular space, through calcium-independent cell-adhesion activity. The polypeptide is Claudin-11 (CLDN11) (Bos taurus (Bovine)).